Reading from the N-terminus, the 1082-residue chain is TNF receptor-associated factor homolog 1b (1082 aa).

The tract at residues 1-54 (MAEAVDEDSGVGRSLEESSNGQHSQAGEALSEWRSSGQVENGTPSTSPSYWDID) is disordered. Position 2 is an N-acetylalanine (A2). A compositionally biased stretch (polar residues) spans 33–49 (WRSSGQVENGTPSTSPS). An MATH domain is found at 67-198 (YGQYTWKIPK…SGCLTIEAKV (132 aa)). 6 disordered regions span residues 358-388 (LPPK…ERDE), 440-666 (TEQR…SNVG), 697-762 (SIVN…QVVL), 780-800 (LSAP…APII), 812-841 (SSVQ…NQQT), and 858-889 (SSSS…PTSS). Basic and acidic residues-rich tracts occupy residues 359 to 388 (PPKD…ERDE) and 440 to 453 (TEQR…EREK). Residues 446–507 (RGAAEREKKS…EEEKDSVTEK (62 aa)) adopt a coiled-coil conformation. Residues 454–471 (KSKKKQAKQKRNKNKGKD) show a composition bias toward basic residues. Residues 472-488 (KRKEEKVSFATHAKDLE) are compositionally biased toward basic and acidic residues. 2 stretches are compositionally biased toward low complexity: residues 519 to 534 (GDVS…SADI) and 560 to 573 (SSEG…ISIS). 2 stretches are compositionally biased toward polar residues: residues 588-630 (DDSS…QQVK) and 645-666 (QPST…SNVG). 2 stretches are compositionally biased toward low complexity: residues 858 to 871 (SSSS…SSHG) and 878 to 889 (PSSSYSQAPTSS).

In terms of assembly, forms homooligomers. Interacts with SNC1, RPS2 and CPR1/CPR30. Interacts with ATG6.

The protein localises to the cytoplasm. Its subcellular location is the cell membrane. Its function is as follows. Functions redundantly with TRAF1A in the regulation of plant immune response. Contributes to the turnover of the nucleotide-binding domain and leucine-rich repeat-containing (NB-LRR) immune receptors SNC1 and RPS2. May associate with an E3 ubiquitin-protein ligase complex, which modulates ubiquitination and subsequent degradation of NB-LRR immune sensors to maintain their homeostasis. Functions redundantly with TRAF1A in the regulation of autophagosome formation. Required for SINAT1- and SINAT2-mediated ubiquitination and destabilization of ATG6. Functions as a molecular adapter that helps to regulate autophagy by modulating ATG6 stability. The polypeptide is TNF receptor-associated factor homolog 1b (Arabidopsis thaliana (Mouse-ear cress)).